The chain runs to 526 residues: Opine oxidase subunit A (526 aa).

Residues Cys396, Cys398, Cys431, and Cys436 each contribute to the [2Fe-2S] cluster site.

The protein to T-protein and to dimethylglycine dehydrogenase. In terms of assembly, heterodimer of a subunit A and a subunit B. It depends on [2Fe-2S] cluster as a cofactor.

It participates in opine metabolism; octopine degradation. Functionally, oxidative cleavage of octopine into L-arginine and pyruvate. In Rhizobium meliloti (Ensifer meliloti), this protein is Opine oxidase subunit A (ooxA).